A 391-amino-acid polypeptide reads, in one-letter code: Methylthioribose-1-phosphate isomerase (391 aa).

Asp-267 functions as the Proton donor in the catalytic mechanism.

Belongs to the eIF-2B alpha/beta/delta subunits family. MtnA subfamily.

The protein localises to the cytoplasm. It is found in the nucleus. The enzyme catalyses 5-(methylsulfanyl)-alpha-D-ribose 1-phosphate = 5-(methylsulfanyl)-D-ribulose 1-phosphate. It functions in the pathway amino-acid biosynthesis; L-methionine biosynthesis via salvage pathway; L-methionine from S-methyl-5-thio-alpha-D-ribose 1-phosphate: step 1/6. Its function is as follows. Catalyzes the interconversion of methylthioribose-1-phosphate (MTR-1-P) into methylthioribulose-1-phosphate (MTRu-1-P). This chain is Methylthioribose-1-phosphate isomerase, found in Ajellomyces capsulatus (strain NAm1 / WU24) (Darling's disease fungus).